The primary structure comprises 597 residues: Electron transfer flavoprotein-ubiquinone oxidoreductase, mitochondrial (597 aa).

An FAD-binding site is contributed by 53–67 (VVIVGGGPSGLSAAI). An intramembrane segment occupies 91–112 (IGGHTLSGAVIETRALDELIPN). Positions 285 and 286 each coordinate a ubiquinone. Residues 409–426 (IDPATYDKNIRDTYVVKE) lie within the membrane without spanning it. [4Fe-4S] cluster is bound by residues Cys540, Cys566, Cys569, and Cys572. Residues 557 to 586 (KRLQINAQNCIHCKTCDIKDPQQNINWVTP) enclose the 4Fe-4S ferredoxin-type domain.

This sequence belongs to the ETF-QO/FixC family. In terms of assembly, monomer. Requires [4Fe-4S] cluster as cofactor. FAD serves as cofactor.

The protein localises to the mitochondrion inner membrane. It carries out the reaction a ubiquinone + reduced [electron-transfer flavoprotein] = a ubiquinol + oxidized [electron-transfer flavoprotein] + H(+). Accepts electrons from ETF and reduces ubiquinone. The polypeptide is Electron transfer flavoprotein-ubiquinone oxidoreductase, mitochondrial (let-721) (Caenorhabditis elegans).